Reading from the N-terminus, the 310-residue chain is Glutaminase (310 aa).

Ser67, Asn118, Glu161, Asn168, Tyr192, Tyr244, and Val262 together coordinate substrate.

Belongs to the glutaminase family. As to quaternary structure, homotetramer.

It carries out the reaction L-glutamine + H2O = L-glutamate + NH4(+). This Legionella pneumophila (strain Corby) protein is Glutaminase.